Reading from the N-terminus, the 354-residue chain is Probable butyrate kinase (354 aa).

The protein belongs to the acetokinase family.

The protein resides in the cytoplasm. It catalyses the reaction butanoate + ATP = butanoyl phosphate + ADP. This Phocaeicola vulgatus (strain ATCC 8482 / DSM 1447 / JCM 5826 / CCUG 4940 / NBRC 14291 / NCTC 11154) (Bacteroides vulgatus) protein is Probable butyrate kinase.